A 205-amino-acid chain; its full sequence is V-type ATP synthase subunit E (205 aa).

It belongs to the V-ATPase E subunit family.

Its function is as follows. Produces ATP from ADP in the presence of a proton gradient across the membrane. This is V-type ATP synthase subunit E from Treponema denticola (strain ATCC 35405 / DSM 14222 / CIP 103919 / JCM 8153 / KCTC 15104).